A 713-amino-acid chain; its full sequence is tRNA 5-methylaminomethyl-2-thiouridine biosynthesis bifunctional protein MnmC (713 aa).

The tRNA (mnm(5)s(2)U34)-methyltransferase stretch occupies residues Met1 to Pro300. Residues Ile306–Leu713 are FAD-dependent cmnm(5)s(2)U34 oxidoreductase.

In the N-terminal section; belongs to the methyltransferase superfamily. tRNA (mnm(5)s(2)U34)-methyltransferase family. This sequence in the C-terminal section; belongs to the DAO family. Requires FAD as cofactor.

The protein resides in the cytoplasm. The catalysed reaction is 5-aminomethyl-2-thiouridine(34) in tRNA + S-adenosyl-L-methionine = 5-methylaminomethyl-2-thiouridine(34) in tRNA + S-adenosyl-L-homocysteine + H(+). Catalyzes the last two steps in the biosynthesis of 5-methylaminomethyl-2-thiouridine (mnm(5)s(2)U) at the wobble position (U34) in tRNA. Catalyzes the FAD-dependent demodification of cmnm(5)s(2)U34 to nm(5)s(2)U34, followed by the transfer of a methyl group from S-adenosyl-L-methionine to nm(5)s(2)U34, to form mnm(5)s(2)U34. This chain is tRNA 5-methylaminomethyl-2-thiouridine biosynthesis bifunctional protein MnmC, found in Shewanella baltica (strain OS155 / ATCC BAA-1091).